The primary structure comprises 294 residues: 4-hydroxy-tetrahydrodipicolinate synthase (294 aa).

Threonine 45 is a binding site for pyruvate. Tyrosine 133 functions as the Proton donor/acceptor in the catalytic mechanism. Lysine 161 (schiff-base intermediate with substrate) is an active-site residue. Isoleucine 203 lines the pyruvate pocket.

It belongs to the DapA family. In terms of assembly, homotetramer; dimer of dimers.

Its subcellular location is the cytoplasm. It catalyses the reaction L-aspartate 4-semialdehyde + pyruvate = (2S,4S)-4-hydroxy-2,3,4,5-tetrahydrodipicolinate + H2O + H(+). The protein operates within amino-acid biosynthesis; L-lysine biosynthesis via DAP pathway; (S)-tetrahydrodipicolinate from L-aspartate: step 3/4. Catalyzes the condensation of (S)-aspartate-beta-semialdehyde [(S)-ASA] and pyruvate to 4-hydroxy-tetrahydrodipicolinate (HTPA). This is 4-hydroxy-tetrahydrodipicolinate synthase from Shewanella baltica (strain OS223).